Consider the following 279-residue polypeptide: Reaction center protein L chain (279 aa).

The next 3 helical transmembrane spans lie at 33–56, 85–113, and 116–141; these read GFFG…GASQ, GLWQ…RKLG, and YHVP…ILMG. (7R,8Z)-bacteriochlorophyll b-binding residues include histidine 154 and histidine 174. Residues 171–200 traverse the membrane as a helical segment; it reads NPAHMLAITFFFTTTLAMSMHGGLILSAAN. Position 191 (histidine 191) interacts with Fe cation. Residue phenylalanine 217 coordinates a ubiquinone. A helical membrane pass occupies residues 226 to 252; it reads GSLGIHRLGLFLALSAAFWSAVCIVIS. Histidine 231 lines the Fe cation pocket.

The protein belongs to the reaction center PufL/M/PsbA/D family. As to quaternary structure, reaction center is composed of four bacteriochlorophylls, two bacteriopheophytins, two ubiquinones, one iron, and three highly hydrophobic polypeptide chains (designated L, M, and H).

Its subcellular location is the cell inner membrane. In terms of biological role, the reaction center is a membrane-bound complex that mediates the initial photochemical event in the electron transfer process of photosynthesis. The chain is Reaction center protein L chain (pufL) from Rubrivivax gelatinosus (Rhodocyclus gelatinosus).